We begin with the raw amino-acid sequence, 243 residues long: Anti-sigma-K factor RskA (243 aa).

Over 1–102 (MTEPNNTDLL…RGGESRWRTA (102 aa)) the chain is Cytoplasmic. A helical membrane pass occupies residues 103–123 (VLAAAAVAVVGLGALGVGLAL). The Extracellular portion of the chain corresponds to 124–243 (RPAVSPTTAD…SPAFAELPLT (120 aa)). Residues 223 to 243 (VEPPGGSQRPTSPAFAELPLT) form a disordered region.

This sequence belongs to the anti-sigma-K factor family.

The protein localises to the cell membrane. An anti-sigma factor for extracytoplasmic function (ECF) sigma factor SigK. ECF sigma factors are held in an inactive form by an anti-sigma factor until released by regulated intramembrane proteolysis (RIP). RIP occurs when an extracytoplasmic signal triggers a concerted proteolytic cascade to transmit information and elicit cellular responses. The membrane-spanning regulatory substrate protein is first cut extracytoplasmically (site-1 protease, S1P), then within the membrane itself (site-2 protease, S2P, Rip1), while cytoplasmic proteases finish degrading the regulatory protein, liberating the sigma factor. This Mycobacterium sp. (strain JLS) protein is Anti-sigma-K factor RskA (rskA).